Here is a 153-residue protein sequence, read N- to C-terminus: Nitrogen regulatory protein (153 aa).

Positions 5–148 constitute a PTS EIIA type-2 domain; the sequence is DLVAPEAILP…QAIYSVLALP (144 aa). His66 (tele-phosphohistidine intermediate) is an active-site residue.

Its subcellular location is the cytoplasm. In terms of biological role, seems to have a role in regulating nitrogen assimilation. This Bradyrhizobium diazoefficiens (strain JCM 10833 / BCRC 13528 / IAM 13628 / NBRC 14792 / USDA 110) protein is Nitrogen regulatory protein (ptsN).